Here is a 409-residue protein sequence, read N- to C-terminus: Divalent metal cation transporter MntH (409 aa).

11 consecutive transmembrane segments (helical) span residues 19–39 (LSLM…GNFA), 46–66 (ATFG…AMLV), 98–118 (WVQA…GAAI), 122–142 (LLFG…TFLI), 155–175 (LVIG…LIFS), 196–216 (AVFL…IYLH), 241–261 (IAMT…AAAF), 290–310 (VFGL…TLAG), 320–340 (FYIP…IVIL), 348–368 (ILVM…VPLL), and 388–408 (ILGK…LISL).

It belongs to the NRAMP family.

The protein localises to the cell inner membrane. Its function is as follows. H(+)-stimulated, divalent metal cation uptake system. The sequence is that of Divalent metal cation transporter MntH from Yersinia pseudotuberculosis serotype O:1b (strain IP 31758).